Here is a 191-residue protein sequence, read N- to C-terminus: UMP-CMP kinase 2 (191 aa).

12 to 17 (GSGKGT) is an ATP binding site. The tract at residues 32–62 (SAGDLLRAERQREGSEFGALIESHIKNGSIV) is NMP. Residues Arg38, 60 to 62 (SIV), and 88 to 91 (GFPR) contribute to the a ribonucleoside 5'-phosphate site. CMP is bound at residue Asn95. The LID stretch occupies residues 128–136 (NRGQGRTDD). Arg129 contributes to the ATP binding site. Residues Arg133 and Arg144 each contribute to the a ribonucleoside 5'-phosphate site. An ATP-binding site is contributed by Arg172.

This sequence belongs to the adenylate kinase family. UMP-CMP kinase subfamily. Monomer. Requires Mg(2+) as cofactor. As to expression, expressed in neurons and the pharynx.

The protein resides in the cytoplasm. Its subcellular location is the nucleus. It catalyses the reaction CMP + ATP = CDP + ADP. It carries out the reaction dCMP + ATP = dCDP + ADP. The catalysed reaction is UMP + ATP = UDP + ADP. Its function is as follows. Catalyzes the phosphorylation of pyrimidine nucleoside monophosphates at the expense of ATP. Plays an important role in de novo pyrimidine nucleotide biosynthesis. Has preference for UMP and CMP as phosphate acceptors. In Caenorhabditis elegans, this protein is UMP-CMP kinase 2.